A 233-amino-acid polypeptide reads, in one-letter code: Purine nucleoside phosphorylase DeoD-type (233 aa).

His-4 contributes to the a purine D-ribonucleoside binding site. Residues Gly-20, Arg-24, Arg-43, and 87–90 (RIGT) contribute to the phosphate site. A purine D-ribonucleoside contacts are provided by residues 179-181 (EME) and 203-204 (SD). Asp-204 functions as the Proton donor in the catalytic mechanism.

The protein belongs to the PNP/UDP phosphorylase family. As to quaternary structure, homohexamer; trimer of homodimers.

The catalysed reaction is a purine D-ribonucleoside + phosphate = a purine nucleobase + alpha-D-ribose 1-phosphate. It carries out the reaction a purine 2'-deoxy-D-ribonucleoside + phosphate = a purine nucleobase + 2-deoxy-alpha-D-ribose 1-phosphate. Functionally, catalyzes the reversible phosphorolytic breakdown of the N-glycosidic bond in the beta-(deoxy)ribonucleoside molecules, with the formation of the corresponding free purine bases and pentose-1-phosphate. The sequence is that of Purine nucleoside phosphorylase DeoD-type from Helicobacter pylori (strain P12).